The following is a 216-amino-acid chain: 3-isopropylmalate dehydratase small subunit (216 aa).

The protein belongs to the LeuD family. LeuD type 1 subfamily. Heterodimer of LeuC and LeuD.

The enzyme catalyses (2R,3S)-3-isopropylmalate = (2S)-2-isopropylmalate. The protein operates within amino-acid biosynthesis; L-leucine biosynthesis; L-leucine from 3-methyl-2-oxobutanoate: step 2/4. Catalyzes the isomerization between 2-isopropylmalate and 3-isopropylmalate, via the formation of 2-isopropylmaleate. This Methylibium petroleiphilum (strain ATCC BAA-1232 / LMG 22953 / PM1) protein is 3-isopropylmalate dehydratase small subunit.